Consider the following 400-residue polypeptide: Subtilisin-like protease 7 (400 aa).

The first 20 residues, 1–20, serve as a signal peptide directing secretion; the sequence is MGFITKAIPLALAAASVING. The propeptide occupies 21 to 119; the sequence is AEILETRAGV…IERDARVQIN (99 aa). Residues 36 to 118 form the Inhibitor I9 domain; the sequence is KYIVVMNDGI…YIERDARVQI (83 aa). The 272-residue stretch at 129–400 folds into the Peptidase S8 domain; that stretch reads SWGLARVGSK…SKLINNGSGM (272 aa). Catalysis depends on charge relay system residues D161 and H192. An N-linked (GlcNAc...) asparagine glycan is attached at N252. Residue S346 is the Charge relay system of the active site. N-linked (GlcNAc...) asparagine glycosylation occurs at N396.

It belongs to the peptidase S8 family.

Its subcellular location is the secreted. Its function is as follows. Secreted subtilisin-like serine protease with keratinolytic activity that contributes to pathogenicity. This Trichophyton violaceum protein is Subtilisin-like protease 7 (SUB7).